Here is a 596-residue protein sequence, read N- to C-terminus: Actin-related protein 9 (596 aa).

The interval 148-178 is disordered; the sequence is LASPAETSPDKGDASASEAVPDVTDSKDTSE.

It belongs to the actin family. ARP8 subfamily.

This is Actin-related protein 9 (ARP9) from Arabidopsis thaliana (Mouse-ear cress).